Consider the following 596-residue polypeptide: Proline--tRNA ligase (596 aa).

Belongs to the class-II aminoacyl-tRNA synthetase family. ProS type 1 subfamily. In terms of assembly, homodimer.

The protein resides in the cytoplasm. It catalyses the reaction tRNA(Pro) + L-proline + ATP = L-prolyl-tRNA(Pro) + AMP + diphosphate. Catalyzes the attachment of proline to tRNA(Pro) in a two-step reaction: proline is first activated by ATP to form Pro-AMP and then transferred to the acceptor end of tRNA(Pro). As ProRS can inadvertently accommodate and process non-cognate amino acids such as alanine and cysteine, to avoid such errors it has two additional distinct editing activities against alanine. One activity is designated as 'pretransfer' editing and involves the tRNA(Pro)-independent hydrolysis of activated Ala-AMP. The other activity is designated 'posttransfer' editing and involves deacylation of mischarged Ala-tRNA(Pro). The misacylated Cys-tRNA(Pro) is not edited by ProRS. The protein is Proline--tRNA ligase of Prochlorococcus marinus (strain NATL2A).